Consider the following 117-residue polypeptide: Small ribosomal subunit protein uS17 (117 aa).

Positions 97–117 (AEGLAAAHAGEPETESAATDA) are disordered.

It belongs to the universal ribosomal protein uS17 family. In terms of assembly, part of the 30S ribosomal subunit.

Its function is as follows. One of the primary rRNA binding proteins, it binds specifically to the 5'-end of 16S ribosomal RNA. The chain is Small ribosomal subunit protein uS17 from Rhodopirellula baltica (strain DSM 10527 / NCIMB 13988 / SH1).